Consider the following 235-residue polypeptide: 5'-methylthioadenosine/S-adenosylhomocysteine nucleosidase (235 aa).

Glutamate 12 functions as the Proton acceptor in the catalytic mechanism. Residues glycine 78, methionine 153, and methionine 174–glutamate 175 each bind substrate. The active-site Proton donor is aspartate 198.

The protein belongs to the PNP/UDP phosphorylase family. MtnN subfamily.

The enzyme catalyses S-adenosyl-L-homocysteine + H2O = S-(5-deoxy-D-ribos-5-yl)-L-homocysteine + adenine. It carries out the reaction S-methyl-5'-thioadenosine + H2O = 5-(methylsulfanyl)-D-ribose + adenine. It catalyses the reaction 5'-deoxyadenosine + H2O = 5-deoxy-D-ribose + adenine. It functions in the pathway amino-acid biosynthesis; L-methionine biosynthesis via salvage pathway; S-methyl-5-thio-alpha-D-ribose 1-phosphate from S-methyl-5'-thioadenosine (hydrolase route): step 1/2. Functionally, catalyzes the irreversible cleavage of the glycosidic bond in both 5'-methylthioadenosine (MTA) and S-adenosylhomocysteine (SAH/AdoHcy) to adenine and the corresponding thioribose, 5'-methylthioribose and S-ribosylhomocysteine, respectively. Also cleaves 5'-deoxyadenosine, a toxic by-product of radical S-adenosylmethionine (SAM) enzymes, into 5-deoxyribose and adenine. The sequence is that of 5'-methylthioadenosine/S-adenosylhomocysteine nucleosidase from Pseudoalteromonas translucida (strain TAC 125).